The sequence spans 475 residues: Squamosa promoter-binding-like protein 12 (475 aa).

Residues 49–73 (NHGSTNSSGGTFTSSSELANGSSKS) are disordered. The span at 51–73 (GSTNSSGGTFTSSSELANGSSKS) shows a compositional bias: low complexity. The SBP-type zinc-finger motif lies at 177 to 254 (SSYCQVEGCK…SDHNARRRKP (78 aa)). Positions 180, 185, 202, 205, 221, 224, 228, and 240 each coordinate Zn(2+). The Bipartite nuclear localization signal motif lies at 237-253 (KKSCRRRLSDHNARRRK). The tract at residues 437 to 475 (GGGGFWQDGDDPPPLDHASQAQAFMHPGNGSSSGYGHLH) is disordered. Residues 465–475 (NGSSSGYGHLH) show a composition bias toward polar residues.

In terms of tissue distribution, expressed in young panicles.

The protein resides in the nucleus. Trans-acting factor that binds specifically to the consensus nucleotide sequence 5'-TNCGTACAA-3'. May be involved in panicle development. The protein is Squamosa promoter-binding-like protein 12 (SPL12) of Oryza sativa subsp. indica (Rice).